The chain runs to 93 residues: Putative regulatory protein LBL_1834 (93 aa).

The protein belongs to the RemA family.

The polypeptide is Putative regulatory protein LBL_1834 (Leptospira borgpetersenii serovar Hardjo-bovis (strain L550)).